Consider the following 115-residue polypeptide: Large ribosomal subunit protein bL19 (115 aa).

The protein belongs to the bacterial ribosomal protein bL19 family.

This protein is located at the 30S-50S ribosomal subunit interface and may play a role in the structure and function of the aminoacyl-tRNA binding site. This is Large ribosomal subunit protein bL19 from Caldanaerobacter subterraneus subsp. tengcongensis (strain DSM 15242 / JCM 11007 / NBRC 100824 / MB4) (Thermoanaerobacter tengcongensis).